A 193-amino-acid polypeptide reads, in one-letter code: Ribonuclease HII (193 aa).

One can recognise an RNase H type-2 domain in the interval 15 to 193 (YIVAGVDEAG…SYHRKSFKFC (179 aa)). A divalent metal cation-binding residues include D21, E22, and D112.

Belongs to the RNase HII family. It depends on Mn(2+) as a cofactor. Requires Mg(2+) as cofactor.

It is found in the cytoplasm. The enzyme catalyses Endonucleolytic cleavage to 5'-phosphomonoester.. Endonuclease that specifically degrades the RNA of RNA-DNA hybrids. This chain is Ribonuclease HII, found in Rickettsia typhi (strain ATCC VR-144 / Wilmington).